We begin with the raw amino-acid sequence, 366 residues long: Hydroxyproline O-arabinosyltransferase 1 (366 aa).

Residues 6–26 (TLFYPLLITLSVALITYNIII) form a helical; Signal-anchor membrane-spanning segment.

As to expression, ubiquitous.

It is found in the golgi apparatus. The protein resides in the cis-Golgi network membrane. It catalyses the reaction trans-4-hydroxy-L-prolyl-[protein] + UDP-beta-L-arabinofuranose = O-(beta-L-arabinofuranosyl)-trans-4-hydroxy-L-prolyl-[protein] + UDP + H(+). Functionally, glycosyltransferase involved in the O-arabinosylation of several proteins including extensins and small signaling peptides. Catalyzes the transfer of the initial L-arabinose to the hydroxyl group of Hyp residues. Contributes redundantly with HPAT2 and HPAT3 to arabinosylation of EXT3. In Arabidopsis thaliana (Mouse-ear cress), this protein is Hydroxyproline O-arabinosyltransferase 1.